The sequence spans 692 residues: Putative ESX-1 scaffolding and assembly protein SaeA (692 aa).

Over residues 1–21 (MGERGELVSDLHPSDDHDADP) the composition is skewed to basic and acidic residues. 2 disordered regions span residues 1 to 23 (MGER…DPRL) and 87 to 134 (PAAP…TTGF). Residues 89-107 (APEPDPPPVPEPQPEPEPG) show a composition bias toward pro residues.

Functionally, may be involved in assembly of the ESX-1 / type VII specialized secretion system (T7SS), which exports several proteins including EsxA and EsxB. Involved in DNA conjugation in recipient (MKD8) but not donor (mc(2)155) strain. The chain is Putative ESX-1 scaffolding and assembly protein SaeA (saeA) from Mycolicibacterium smegmatis (strain MKD8) (Mycobacterium smegmatis).